A 310-amino-acid chain; its full sequence is Receptor homology region, transmembrane domain- and RING domain-containing protein 1 (310 aa).

Positions 1–25 (MRLVVSSCLLVAAPFLSSLLRVSLA) are cleaved as a signal peptide. Over 26–168 (TVVLNSISAS…NPPDRGSAWT (143 aa)) the chain is Lumenal. Cysteine 65 and cysteine 92 are oxidised to a cystine. Asparagine 75 carries an N-linked (GlcNAc...) asparagine glycan. A PA domain is found at 81–149 (TTKFALIIRG…VAGEILRKYA (69 aa)). Residues 169 to 189 (VLAISFFSLLLIVTFLLIAFF) form a helical membrane-spanning segment. At 190–310 (APRHWTQWRG…FAFAQSSQSR (121 aa)) the chain is on the cytoplasmic side. The RING-type; atypical zinc finger occupies 232 to 274 (CAICLEDYRFGESLRLLPCQHAFHLNCIDSWLTKWGTSCPVCK). Residues 284–293 (SEVHKRESPR) are compositionally biased toward basic and acidic residues. The tract at residues 284-310 (SEVHKRESPRTDTSTSRFAFAQSSQSR) is disordered. Over residues 294–310 (TDTSTSRFAFAQSSQSR) the composition is skewed to polar residues.

As to expression, expressed in leaves, stems, flowers and siliques.

The protein resides in the prevacuolar compartment membrane. Its subcellular location is the protein storage vacuole membrane. It localises to the golgi apparatus membrane. Functionally, involved in the trafficking of vacuolar proteins. Functions probably as a sorting receptor for protein trafficking to the protein storage vacuole (PSV) by binding the C-terminal vacuolar sorting determinant (VSD) of vacuolar-sorted proteins. This Arabidopsis thaliana (Mouse-ear cress) protein is Receptor homology region, transmembrane domain- and RING domain-containing protein 1 (RMR1).